Here is a 75-residue protein sequence, read N- to C-terminus: Putative membrane protein insertion efficiency factor 2 (75 aa).

It belongs to the UPF0161 family.

It localises to the cell membrane. Its function is as follows. Could be involved in insertion of integral membrane proteins into the membrane. The protein is Putative membrane protein insertion efficiency factor 2 of Bacillus licheniformis (strain ATCC 14580 / DSM 13 / JCM 2505 / CCUG 7422 / NBRC 12200 / NCIMB 9375 / NCTC 10341 / NRRL NRS-1264 / Gibson 46).